Here is a 232-residue protein sequence, read N- to C-terminus: Zinc-finger homeodomain protein 5 (232 aa).

The segment covering 1 to 11 (MELSEHEEDAG) has biased composition (acidic residues). The tract at residues 1–25 (MELSEHEEDAGDVGGGCSSPPTPPH) is disordered. The ZF-HD dimerization-type; degenerate zinc finger occupies 40 to 86 (YHECLRNHAAASGGHVVDGCGEFMPASTEEPLACAACGCHRSFHRRD). Residues 126–170 (GLPFPGYGTPSGGTGTTTASSSDERLRPSPVQPRRRSRTTFTREQ) are disordered. The homeobox DNA-binding region spans 159–222 (RRRSRTTFTR…NNKHSFKQKQ (64 aa)).

As to quaternary structure, homo- and heterodimer with other ZFHD proteins.

Its subcellular location is the nucleus. In terms of biological role, putative transcription factor. The polypeptide is Zinc-finger homeodomain protein 5 (ZHD5) (Oryza sativa subsp. japonica (Rice)).